A 162-amino-acid polypeptide reads, in one-letter code: MSGLTHFDAAGHAHMVDVGGKQETQRIAIARGTIRMLPATFALIRDGKAKKGDVLGVARIAAIQGAKRTADLIPLCHPLALTRVAVDFELDDALPGVHCVVQVETFGRTGVEMEALTAVQVGLLTVYDMCKAVDRGMVITDVSVREKRGGKSGDWKAEDVAG.

Residues 75-77 and 113-114 each bind substrate; these read LCH and ME. Residue D128 is part of the active site.

The protein belongs to the MoaC family. As to quaternary structure, homohexamer; trimer of dimers.

It catalyses the reaction (8S)-3',8-cyclo-7,8-dihydroguanosine 5'-triphosphate = cyclic pyranopterin phosphate + diphosphate. It functions in the pathway cofactor biosynthesis; molybdopterin biosynthesis. Functionally, catalyzes the conversion of (8S)-3',8-cyclo-7,8-dihydroguanosine 5'-triphosphate to cyclic pyranopterin monophosphate (cPMP). This chain is Cyclic pyranopterin monophosphate synthase, found in Burkholderia cenocepacia (strain ATCC BAA-245 / DSM 16553 / LMG 16656 / NCTC 13227 / J2315 / CF5610) (Burkholderia cepacia (strain J2315)).